The primary structure comprises 77 residues: Probable Vpr-like protein (77 aa).

Residues 34–42 (LIRLLQGLL) carry the Nuclear export signal motif. The short motif at 44–53 (RLRFRKPKSK) is the Nuclear localization signal element.

The protein resides in the virion. It localises to the host nucleus. Functionally, seems to function as a Vpr-like protein, since it mediates host cell cycle arrest in G2 phase. Cell cycle arrest creates a favorable environment for maximizing viral expression and production. This chain is Probable Vpr-like protein, found in Felidae (cat family).